The chain runs to 356 residues: Heat-inducible transcription repressor HrcA (356 aa).

Belongs to the HrcA family.

Negative regulator of class I heat shock genes (grpE-dnaK-dnaJ and groELS operons). Prevents heat-shock induction of these operons. The polypeptide is Heat-inducible transcription repressor HrcA (Chlorobaculum tepidum (strain ATCC 49652 / DSM 12025 / NBRC 103806 / TLS) (Chlorobium tepidum)).